We begin with the raw amino-acid sequence, 102 residues long: NADH-quinone oxidoreductase subunit K (102 aa).

The next 3 helical transmembrane spans lie at 5–25, 31–51, and 65–85; these read LSHY…GIFL, IVIL…MVAF, and LFIL…LVVF.

It belongs to the complex I subunit 4L family. In terms of assembly, NDH-1 is composed of 14 different subunits. Subunits NuoA, H, J, K, L, M, N constitute the membrane sector of the complex.

The protein resides in the cell inner membrane. It carries out the reaction a quinone + NADH + 5 H(+)(in) = a quinol + NAD(+) + 4 H(+)(out). In terms of biological role, NDH-1 shuttles electrons from NADH, via FMN and iron-sulfur (Fe-S) centers, to quinones in the respiratory chain. The immediate electron acceptor for the enzyme in this species is believed to be ubiquinone. Couples the redox reaction to proton translocation (for every two electrons transferred, four hydrogen ions are translocated across the cytoplasmic membrane), and thus conserves the redox energy in a proton gradient. In Rhizobium johnstonii (strain DSM 114642 / LMG 32736 / 3841) (Rhizobium leguminosarum bv. viciae), this protein is NADH-quinone oxidoreductase subunit K.